A 927-amino-acid chain; its full sequence is Isoleucine--tRNA ligase (927 aa).

The short motif at 60–70 (PYANGNIHLGH) is the 'HIGH' region element. Residue E557 participates in L-isoleucyl-5'-AMP binding. Residues 598–602 (KMSKS) carry the 'KMSKS' region motif. Residue K601 coordinates ATP. Zn(2+) contacts are provided by C895, C898, C915, and C918.

It belongs to the class-I aminoacyl-tRNA synthetase family. IleS type 1 subfamily. As to quaternary structure, monomer. The cofactor is Zn(2+).

It is found in the cytoplasm. The catalysed reaction is tRNA(Ile) + L-isoleucine + ATP = L-isoleucyl-tRNA(Ile) + AMP + diphosphate. Its function is as follows. Catalyzes the attachment of isoleucine to tRNA(Ile). As IleRS can inadvertently accommodate and process structurally similar amino acids such as valine, to avoid such errors it has two additional distinct tRNA(Ile)-dependent editing activities. One activity is designated as 'pretransfer' editing and involves the hydrolysis of activated Val-AMP. The other activity is designated 'posttransfer' editing and involves deacylation of mischarged Val-tRNA(Ile). The chain is Isoleucine--tRNA ligase from Syntrophomonas wolfei subsp. wolfei (strain DSM 2245B / Goettingen).